A 723-amino-acid chain; its full sequence is DNA-binding protein RFX2 (723 aa).

The disordered stretch occupies residues 1 to 46; the sequence is MQNSEGGADSPASVALRPSAAAPPVPASPQRVLVQAASSNPKGAQM. Low complexity predominate over residues 10-20; that stretch reads SPASVALRPSA. S28 carries the post-translational modification Phosphoserine. The segment at residues 199-274 is a DNA-binding region (RFX-type winged-helix); it reads HLQWLLDNYE…YHYYGIRLKP (76 aa). Residues 292–332 are disordered; sequence QQPMHQKPRYRPAQKTDSLGDSGSHSGLHSTPEQTMAVQSQ. A compositionally biased stretch (low complexity) spans 308-321; that stretch reads DSLGDSGSHSGLHS. A compositionally biased stretch (polar residues) spans 322–332; it reads TPEQTMAVQSQ. The residue at position 416 (S416) is a Phosphoserine. The tract at residues 688 to 723 is disordered; sequence MGDEQRGSEAGPDARSLGEPLVKRERSDPNHSLQGI.

The protein belongs to the RFX family. As to quaternary structure, homodimer; probably only forms homodimers in testis. Heterodimer; heterodimerizes with RFX1 and RFX3.

It localises to the nucleus. It is found in the cytoplasm. In terms of biological role, transcription factor that acts as a key regulator of spermatogenesis. Acts by regulating expression of genes required for the haploid phase during spermiogenesis, such as genes required for cilium assembly and function. Recognizes and binds the X-box, a regulatory motif with DNA sequence 5'-GTNRCC(0-3N)RGYAAC-3' present on promoters. Probably activates transcription of the testis-specific histone gene H1-6. This chain is DNA-binding protein RFX2 (RFX2), found in Homo sapiens (Human).